Consider the following 279-residue polypeptide: RRP15-like protein (279 aa).

Disordered stretches follow at residues 1 to 40 (MALL…GANA), 56 to 120 (GPTV…TERR), and 200 to 279 (KSTA…DEED). A compositionally biased stretch (basic and acidic residues) spans 73-83 (KTSEAAKKPGF). Acidic residues-rich tracts occupy residues 93–104 (KEEDDDDEEDGD) and 213–224 (QETDDDDEDDTA). The segment covering 232–245 (KKSEWNVLREDFMT) has biased composition (basic and acidic residues). A compositionally biased stretch (acidic residues) spans 267–279 (DEADDSDDDDEED).

The protein belongs to the RRP15 family.

This chain is RRP15-like protein, found in Drosophila pseudoobscura pseudoobscura (Fruit fly).